A 344-amino-acid chain; its full sequence is S-methyl-5'-thioadenosine phosphorylase (344 aa).

Residues T51, 99–100 (RH), and 132–133 (SA) contribute to the phosphate site. M234 is a binding site for substrate. Residue S235 coordinates phosphate. 258–260 (DYD) is a binding site for substrate.

This sequence belongs to the PNP/MTAP phosphorylase family. MTAP subfamily. As to quaternary structure, homotrimer.

It is found in the cytoplasm. The protein resides in the nucleus. It catalyses the reaction S-methyl-5'-thioadenosine + phosphate = 5-(methylsulfanyl)-alpha-D-ribose 1-phosphate + adenine. It functions in the pathway amino-acid biosynthesis; L-methionine biosynthesis via salvage pathway; S-methyl-5-thio-alpha-D-ribose 1-phosphate from S-methyl-5'-thioadenosine (phosphorylase route): step 1/1. Functionally, catalyzes the reversible phosphorylation of S-methyl-5'-thioadenosine (MTA) to adenine and 5-methylthioribose-1-phosphate. Involved in the breakdown of MTA, a major by-product of polyamine biosynthesis. Responsible for the first step in the methionine salvage pathway after MTA has been generated from S-adenosylmethionine. Has broad substrate specificity with 6-aminopurine nucleosides as preferred substrates. This Phaeosphaeria nodorum (strain SN15 / ATCC MYA-4574 / FGSC 10173) (Glume blotch fungus) protein is S-methyl-5'-thioadenosine phosphorylase.